The primary structure comprises 98 residues: UPF0358 protein LCA_1078 (98 aa).

It belongs to the UPF0358 family.

This is UPF0358 protein LCA_1078 from Latilactobacillus sakei subsp. sakei (strain 23K) (Lactobacillus sakei subsp. sakei).